Consider the following 632-residue polypeptide: Deoxynucleoside triphosphate triphosphohydrolase SAMHD1 (632 aa).

The disordered stretch occupies residues Met-1 to Tyr-22. Residues Trp-44–Asn-107 form the SAM domain. GTP is bound by residues Lys-113 and Val-114. Asn-116 contacts dGTP. GTP contacts are provided by Asp-134, Gln-139, and Arg-142. The dGTP site is built by Gln-146, Leu-147, Val-153, and Arg-161. Gln-146 contributes to the dATP binding site. Gln-146 provides a ligand contact to dCTP. Gln-146 contacts dTTP. A dATP-binding site is contributed by Arg-161. Position 161 (Arg-161) interacts with dCTP. Position 161 (Arg-161) interacts with dTTP. The region spanning Arg-161–Phe-321 is the HD domain. Mn(2+)-binding residues include His-164, His-203, and Asp-204. His-207 and His-212 together coordinate dATP. His-207 and His-212 together coordinate dCTP. DTTP is bound by residues His-207 and His-212. His-230 is an active-site residue. Residue Asp-316 participates in Mn(2+) binding. 12 residues coordinate dGTP: Lys-317, Tyr-320, Asp-324, Arg-338, Arg-357, Lys-359, Asn-363, Arg-371, Tyr-379, Gln-380, His-381, and Lys-382. The dATP site is built by Lys-317, Tyr-320, and Asp-324. Positions 317, 320, and 324 each coordinate dCTP. DTTP-binding residues include Lys-317, Tyr-320, and Asp-324. Arg-371 serves as a coordination point for dATP. Arg-371 serves as a coordination point for dCTP. Gln-380 provides a ligand contact to dATP. Residue Gln-380 coordinates dCTP. Gln-380 provides a ligand contact to dTTP. Residues Arg-456, Lys-460, and Lys-529 each coordinate GTP. Lys-529 serves as a coordination point for dGTP.

It belongs to the SAMHD1 family. As to quaternary structure, homodimer; in absence of GTP and dNTP. Homotetramer; in GTP- and dNTP-bound form. Interacts with rbbp8/CtIP. Requires Zn(2+) as cofactor.

The protein resides in the nucleus. It is found in the chromosome. The enzyme catalyses a 2'-deoxyribonucleoside 5'-triphosphate + H2O = a 2'-deoxyribonucleoside + triphosphate + H(+). It catalyses the reaction dATP + H2O = 2'-deoxyadenosine + triphosphate + H(+). It carries out the reaction dCTP + H2O = 2'-deoxycytidine + triphosphate + H(+). The catalysed reaction is dGTP + H2O = 2'-deoxyguanosine + triphosphate + H(+). The enzyme catalyses dTTP + H2O = thymidine + triphosphate + H(+). Its activity is regulated as follows. Allosterically activated and regulated via the combined actions of GTP and dNTPs (dATP, dGTP, dTTP and dCTP): Allosteric site 1 binds GTP, while allosteric site 2 binds dNTP. Allosteric activation promotes the formation of highly active homotetramers. Protein that acts both as a host restriction factor involved in defense response to virus and as a regulator of DNA end resection at stalled replication forks. Has deoxynucleoside triphosphate (dNTPase) activity, which is required to restrict infection by viruses: dNTPase activity reduces cellular dNTP levels to levels too low for retroviral reverse transcription to occur, blocking early-stage virus replication in dendritic and other myeloid cells. Functions during S phase at stalled DNA replication forks to promote the resection of gapped or reversed forks: acts by stimulating the exonuclease activity of mre11, activating the ATR-CHK1 pathway and allowing the forks to restart replication. Ability to promote DNA end resection at stalled replication forks is independent of dNTPase activity. The sequence is that of Deoxynucleoside triphosphate triphosphohydrolase SAMHD1 from Xenopus laevis (African clawed frog).